Reading from the N-terminus, the 385-residue chain is 1-deoxy-D-xylulose 5-phosphate reductoisomerase (385 aa).

Threonine 10, glycine 11, serine 12, isoleucine 13, and asparagine 124 together coordinate NADPH. Lysine 125 provides a ligand contact to 1-deoxy-D-xylulose 5-phosphate. Glutamate 126 contributes to the NADPH binding site. Aspartate 150 provides a ligand contact to Mn(2+). 1-deoxy-D-xylulose 5-phosphate is bound by residues serine 151, glutamate 152, serine 176, and histidine 199. Residue glutamate 152 participates in Mn(2+) binding. NADPH is bound at residue glycine 205. The 1-deoxy-D-xylulose 5-phosphate site is built by serine 212, asparagine 217, lysine 218, and glutamate 221. Glutamate 221 contacts Mn(2+).

The protein belongs to the DXR family. The cofactor is Mg(2+). It depends on Mn(2+) as a cofactor.

It catalyses the reaction 2-C-methyl-D-erythritol 4-phosphate + NADP(+) = 1-deoxy-D-xylulose 5-phosphate + NADPH + H(+). Its pathway is isoprenoid biosynthesis; isopentenyl diphosphate biosynthesis via DXP pathway; isopentenyl diphosphate from 1-deoxy-D-xylulose 5-phosphate: step 1/6. In terms of biological role, catalyzes the NADPH-dependent rearrangement and reduction of 1-deoxy-D-xylulose-5-phosphate (DXP) to 2-C-methyl-D-erythritol 4-phosphate (MEP). The polypeptide is 1-deoxy-D-xylulose 5-phosphate reductoisomerase (Clostridium botulinum (strain Alaska E43 / Type E3)).